A 559-amino-acid chain; its full sequence is Hepatocyte nuclear factor 1-beta-A (559 aa).

Residues 1–35 (MFANMVSKLTSLQQELLSALLDSGVTKDVLLQALE) form a dimerization region. The 32-residue stretch at 5–36 (MVSKLTSLQQELLSALLDSGVTKDVLLQALED) folds into the HNF-p1 domain. The interval 53 to 98 (MSPSGSKLSDTDSKPVFHTLTNGHSKGKLSGDEGSEDGDDYDTPPI) is disordered. Over residues 85–94 (EGSEDGDDYD) the composition is skewed to acidic residues. In terms of domain architecture, POU-specific atypical spans 100–195 (KELQSQNTEE…ILRQFNQATQ (96 aa)). Residues 240-320 (LRRNRFKWGP…NRRKEEAFRQ (81 aa)) constitute a DNA-binding region (homeobox; HNF1-type). 2 stretches are compositionally biased toward low complexity: residues 334–354 (LNSL…SPPS) and 370–381 (TSSTTINHHSSN). A disordered region spans residues 334-384 (LNSLLSHSSPHHPQTSSSPPSKMQGVRYSQQGPGEVTSSTTINHHSSNAMS).

This sequence belongs to the HNF1 homeobox family. As to quaternary structure, binds DNA as a dimer. Can form homodimer or heterodimer with HNF1-alpha. During embryonic development, expressed dynamically in the developing hindbrain, kidney (pronephros), gut, liver and pancreas; expressed in both intermediate mesoderm (precursor to the kidney) and the caudal hindbrain (including rhombomeres r5 and r6) at 10 hpf with expression diminishing caudally by 14 hpf. Strongly expressed in adult kidney, gut, liver and swim bladder; weakly expressed in brain, eye, testis, ovary and heart.

It localises to the nucleus. Transcription factor that binds to the inverted palindrome 5'-GTTAATNATTAAC-3'. Required for induction of rhombomere r5/r6 gene expression in the hindbrain. This chain is Hepatocyte nuclear factor 1-beta-A (hnf1ba), found in Danio rerio (Zebrafish).